Consider the following 308-residue polypeptide: Cytochrome c biogenesis protein CcsA (308 aa).

The next 7 membrane-spanning stretches (helical) occupy residues isoleucine 2–isoleucine 22, glycine 44–glycine 64, leucine 71–phenylalanine 91, methionine 143–isoleucine 163, valine 212–asparagine 232, tryptophan 247–leucine 267, and alanine 273–valine 293.

The protein belongs to the CcmF/CycK/Ccl1/NrfE/CcsA family. As to quaternary structure, may interact with Ccs1.

The protein localises to the plastid membrane. Functionally, required during biogenesis of c-type cytochromes (cytochrome c6 and cytochrome f) at the step of heme attachment. The polypeptide is Cytochrome c biogenesis protein CcsA (Cuscuta reflexa (Southern Asian dodder)).